Here is a 686-residue protein sequence, read N- to C-terminus: Solute carrier family 22 member 23 (686 aa).

Disordered regions lie at residues 1-62 (MAID…GGGP) and 169-193 (GNRS…DKGD). N-linked (GlcNAc...) asparagine glycosylation occurs at Asn24. The next 2 helical transmembrane spans lie at 234–254 (FSLL…ADWV) and 258–278 (PVLL…ALSV). Asn279 is a glycosylation site (N-linked (GlcNAc...) asparagine). 8 consecutive transmembrane segments (helical) span residues 288 to 308 (FFEG…RIEL), 315 to 335 (FMIT…MPGL), 344 to 364 (VLQA…SIFP), 467 to 487 (ADYY…CVVV), 494 to 514 (GGLL…LGLL), 538 to 558 (IAFS…SVFF), 569 to 589 (CGGL…APII), and 598 to 618 (FLHH…ILLL).

Belongs to the major facilitator (TC 2.A.1) superfamily. Organic cation transporter (TC 2.A.1.19) family.

The protein resides in the membrane. In Homo sapiens (Human), this protein is Solute carrier family 22 member 23 (SLC22A23).